The primary structure comprises 225 residues: Small ribosomal subunit protein uS3 (225 aa).

A KH type-2 domain is found at 38 to 106; it reads LRKFLQGKLQ…EVSLNIVEIR (69 aa).

Belongs to the universal ribosomal protein uS3 family. In terms of assembly, part of the 30S ribosomal subunit. Forms a tight complex with proteins S10 and S14.

Binds the lower part of the 30S subunit head. Binds mRNA in the 70S ribosome, positioning it for translation. This chain is Small ribosomal subunit protein uS3, found in Rhodospirillum centenum (strain ATCC 51521 / SW).